The chain runs to 128 residues: Sulfurtransferase TusD (128 aa).

Cys-78 serves as the catalytic Cysteine persulfide intermediate.

This sequence belongs to the DsrE/TusD family. Heterohexamer, formed by a dimer of trimers. The hexameric TusBCD complex contains 2 copies each of TusB, TusC and TusD. The TusBCD complex interacts with TusE.

The protein localises to the cytoplasm. Part of a sulfur-relay system required for 2-thiolation of 5-methylaminomethyl-2-thiouridine (mnm(5)s(2)U) at tRNA wobble positions. Accepts sulfur from TusA and transfers it in turn to TusE. The protein is Sulfurtransferase TusD of Escherichia coli O127:H6 (strain E2348/69 / EPEC).